A 428-amino-acid chain; its full sequence is Histidine--tRNA ligase (428 aa).

It belongs to the class-II aminoacyl-tRNA synthetase family. Homodimer.

Its subcellular location is the cytoplasm. The catalysed reaction is tRNA(His) + L-histidine + ATP = L-histidyl-tRNA(His) + AMP + diphosphate + H(+). The sequence is that of Histidine--tRNA ligase from Halalkalibacterium halodurans (strain ATCC BAA-125 / DSM 18197 / FERM 7344 / JCM 9153 / C-125) (Bacillus halodurans).